Reading from the N-terminus, the 303-residue chain is NAD kinase (303 aa).

Aspartate 85 acts as the Proton acceptor in catalysis. NAD(+) is bound by residues 85-86 (DG), 159-160 (ND), arginine 187, aspartate 189, 200-205 (TAYALS), alanine 224, and glutamine 258.

This sequence belongs to the NAD kinase family. The cofactor is a divalent metal cation.

Its subcellular location is the cytoplasm. It carries out the reaction NAD(+) + ATP = ADP + NADP(+) + H(+). Its function is as follows. Involved in the regulation of the intracellular balance of NAD and NADP, and is a key enzyme in the biosynthesis of NADP. Catalyzes specifically the phosphorylation on 2'-hydroxyl of the adenosine moiety of NAD to yield NADP. This is NAD kinase from Variovorax paradoxus (strain S110).